A 353-amino-acid chain; its full sequence is MSKTTEVKVVEVQLEDPLPGIVDASRFISGSPTEQRAFAVELVDSVRRCGFVKVINHGLSDELIDELFAWCQSSHVVQNERFFAIDPEQKLAVVNPPGPSPQRGWSCVGAEKASRLFSRGQTSLDLTDARRNQEHFDAGSPSDTKWPSRWPDEAVIPGFKAFLEDFYVRSHQAALLILEALEMGLNLPAGVLKSRCGGCASELRLNNYPEIDIEELRRGKISRIHPHADLGVITCLFQDGLGGLELEHRSHAGSFLPVPPGARSEMVVNISETFQLWTNNVITAGIHQVTVPPEMKTRTEGRISARRSCAFFLKANGDASVAPLPQFVTQERPAAYSEMTALDYHQKRLATAY.

In terms of domain architecture, Fe2OG dioxygenase spans 199–315 (CASELRLNNY…RRSCAFFLKA (117 aa)). The Fe cation site is built by His227, Asp229, and His287. Arg302 is a 2-oxoglutarate binding site.

Belongs to the iron/ascorbate-dependent oxidoreductase family. It depends on Fe(2+) as a cofactor.

It functions in the pathway alkaloid biosynthesis. Functionally, 2-oxoglutarate-dependent dioxygenase; part of the gene cluster that mediates the biosynthesis of paraherquamide, a fungal indole alkaloid that belongs to a family of natural products containing a characteristic bicyclo[2.2.2]diazaoctane core. The first steps in the biosynthesis of paraherquamide is the production of the beta-methyl-proline precursor from L-isoleucine. They require oxidation of a terminally hydroxylated L-isoleucine to the corresponding aldehyde by enzymes which have still to be identified. Spontaneous cyclization and dehydration would yield the 4-methyl pyrolline-5-carboxylic acid, which is then reduced by the pyrroline-5-carboxylate reductase phqD leading to the beta-methyl-proline precursor. The next step of paraherquamide biosynthesis involves coupling of beta-methyl-proline and L-tryptophan by the bimodular NRPS phqB, to produce a monooxopiperazine intermediate. The reductase (R) domain of phqB utilizes NADPH for hydride transfer to reduce the thioester bond of the T domain-tethered linear dipeptide to a hemithioaminal intermediate, which spontaneously cleaves the C-S bond to release the aldehyde product. This compound undergoes spontaneous cyclization and dehydration to give a dienamine which is reverse prenylated at C-2 by the reverse prenyltransferase phqJ. The other prenyltransferase present in the cluster, phqI may be a redundant gene in the pathway. During biosynthetic assembly, the key step to produce the polycyclic core is catalyzed by the bifunctional reductase and intramolecular [4+2] Diels-Alderase, phqE, resulting in formation of the [2.2.2] diazaoctane intermediate preparaherquamide. Following formation of preparaherquamide, an indole 2,3-epoxidation-initiated pinacol-like rearrangement is catalyzed by the phqK FAD-dependent monooxygenase. The prenyltransferase phqA, the cytochrome P450 monooxygenase phqL, and the FAD-linked oxidoreductase phqH (or the cytochrome P450 monooxygenase phqM), are proposed to be involved in the formation of the pyran ring. The FAD-dependent monooxygenase phqK is likely responsible for generation of the spiro-oxindole, and the N-methylation is likely mediated by the phqN methyltransferase leading to the isolable natural product paraherquamide F. However, the order of these biosynthetic steps has still to be determined. In late-stage paraherquamide biosynthesis, the third P450 monooxygenase, phqO, is probably responsible for the C-14 hydroxylation, transforming paraherquamide F to paraherquamide G, and paraherquamide E to the final product paraherquamide A. The expansion from the 6-membered ring pyran (in paraherquamides F and G) to the 7-membered dioxepin ring (in paraherquamides A and E) represents a poorly understood but intriguing process that probably involves the 2-oxoglutarate-dependent dioxygenase phqC. Finally, the remaining members of the paraherquamide cluster, including phqI as well as phqM (or phqH), do not have a clearly prescribed role and appear to be redundant. This chain is 2-oxoglutarate-dependent dioxygenase phqC, found in Penicillium fellutanum.